Reading from the N-terminus, the 196-residue chain is Nucleoside triphosphate pyrophosphatase (196 aa).

The active-site Proton acceptor is D73.

It belongs to the Maf family. It depends on a divalent metal cation as a cofactor.

It localises to the cytoplasm. It catalyses the reaction a ribonucleoside 5'-triphosphate + H2O = a ribonucleoside 5'-phosphate + diphosphate + H(+). It carries out the reaction a 2'-deoxyribonucleoside 5'-triphosphate + H2O = a 2'-deoxyribonucleoside 5'-phosphate + diphosphate + H(+). In terms of biological role, nucleoside triphosphate pyrophosphatase. May have a dual role in cell division arrest and in preventing the incorporation of modified nucleotides into cellular nucleic acids. The polypeptide is Nucleoside triphosphate pyrophosphatase (Anaplasma marginale (strain Florida)).